The chain runs to 622 residues: 4-hydroxyphenylalkanoate adenylyltransferase (622 aa).

This sequence belongs to the ATP-dependent AMP-binding enzyme family.

The catalysed reaction is 17-(4-hydroxyphenyl)heptadecanoate + holo-[(phenol)carboxyphthiodiolenone synthase] + ATP = 17-(4-hydroxyphenyl)heptadecanoyl-[(phenol)carboxyphthiodiolenone synthase] + AMP + diphosphate. The enzyme catalyses 19-(4-hydroxyphenyl)nonadecanoate + holo-[(phenol)carboxyphthiodiolenone synthase] + ATP = 19-(4-hydroxyphenyl)nonadecanoyl-[(phenol)carboxyphthiodiolenone synthase] + AMP + diphosphate. It functions in the pathway lipid metabolism; fatty acid biosynthesis. Catalyzes the activation of long-chain fatty acids as acyl-adenylates (acyl-AMP), which are then transferred to the multifunctional polyketide synthase PpsA for further chain extension. Involved in the biosynthesis of phenolphthiocerol, which is an important intermediate in the biosynthesis of phenolic glycolipid (PGL), also called mycosid B. The polypeptide is 4-hydroxyphenylalkanoate adenylyltransferase (fadD29) (Mycobacterium marinum (strain ATCC BAA-535 / M)).